A 385-amino-acid chain; its full sequence is G2/mitotic-specific cyclin-B3 (385 aa).

Polar residues predominate over residues 1–16 (MMLRSQAKNVDLTSQA). Disordered regions lie at residues 1–48 (MMLR…HSKG) and 63–88 (SAKR…QKSR). Composition is skewed to basic and acidic residues over residues 17-28 (DSRHQQKRKQAE) and 63-80 (SAKR…RDVE).

Belongs to the cyclin family. Cyclin AB subfamily.

The protein resides in the nucleus. Its function is as follows. Could be involved at the G2/M (mitosis) transition. Interacts with the CDK1 and CDK2 protein kinases. G2/M cyclins accumulate steadily during G2 and are abruptly destroyed at mitosis. Plays a role during oocyte meiosis II. In Caenorhabditis elegans, this protein is G2/mitotic-specific cyclin-B3 (cyb-3).